Here is a 79-residue protein sequence, read N- to C-terminus: MARIGVENSLTDVQQALQQQGHEVVTLNSEQDAQGCDCCIVTGQDSNVMGIADASIKGSVITAHGLTTDEICQQVEIRT.

This sequence belongs to the UPF0180 family.

The protein is UPF0180 protein BCG9842_B3897 of Bacillus cereus (strain G9842).